The primary structure comprises 836 residues: DNA repair and recombination protein RadA (836 aa).

Acidic residues predominate over residues Glu15–Glu24. The tract at residues Glu15–Ala41 is disordered. Residues Lys31–Ala41 are compositionally biased toward basic and acidic residues. A DOD-type homing endonuclease domain is found at Phe285–Ile410.

This sequence belongs to the eukaryotic RecA-like protein family. This protein undergoes a protein self splicing that involves a post-translational excision of the intervening region (intein) followed by peptide ligation.

Involved in DNA repair and in homologous recombination. Binds and assemble on single-stranded DNA to form a nucleoprotein filament. Hydrolyzes ATP in a ssDNA-dependent manner and promotes DNA strand exchange between homologous DNA molecules. The polypeptide is DNA repair and recombination protein RadA (radA) (Thermococcus kodakarensis (strain ATCC BAA-918 / JCM 12380 / KOD1) (Pyrococcus kodakaraensis (strain KOD1))).